The primary structure comprises 290 residues: MKKLLREASEYLLSRGIRFPQREAEDILMDLLEISSRSALHQAKLSSEEQSLYWKRLRKRGDRCPTAYIHGKVHFLGVELQVTPQVLIPRQETEIFVEQIIGYLQMHKEKTTFYDVCCGSGCIGLAVRKHCPHVRVTLSDISPEALAIAESNARSNALAVDFLLGDLFDPFSFPADVLVCNPPYLSYKEFFESDPEVRCHEPWKALVGGVSGLEFYHRIATHIHKILVSGGVGWLEIGSTQGEDVKQIFHAKGIRGRVLKDYAQLDRFFFLENQANDAVSSGEVSGFSER.

Residues aspartate 140 and asparagine 181 each coordinate S-adenosyl-L-methionine. A substrate-binding site is contributed by 181–184 (NPPY).

The protein belongs to the protein N5-glutamine methyltransferase family. PrmC subfamily.

It catalyses the reaction L-glutaminyl-[peptide chain release factor] + S-adenosyl-L-methionine = N(5)-methyl-L-glutaminyl-[peptide chain release factor] + S-adenosyl-L-homocysteine + H(+). Functionally, methylates the class 1 translation termination release factors RF1/PrfA and RF2/PrfB on the glutamine residue of the universally conserved GGQ motif. In Chlamydia trachomatis serovar L2 (strain ATCC VR-902B / DSM 19102 / 434/Bu), this protein is Release factor glutamine methyltransferase (prmC).